The primary structure comprises 559 residues: Terpene synthase 1 (559 aa).

Residues D312, D316, D456, and E464 each coordinate Mg(2+). Positions 312-316 (DDLYD) match the DDXXD motif motif.

This sequence belongs to the terpene synthase family. Tpsa subfamily. Mg(2+) is required as a cofactor. Mn(2+) serves as cofactor. As to expression, mostly expressed in stems and, to a lower extent, in leaves, roots and fruits.

The catalysed reaction is (2E,6E)-farnesyl diphosphate = (-)-(E)-beta-caryophyllene + diphosphate. It catalyses the reaction (2E,6E)-farnesyl diphosphate = alpha-humulene + diphosphate. The protein operates within secondary metabolite biosynthesis; terpenoid biosynthesis. Sesquiterpene synthase involved in the biosynthesis of volatile compounds that contribute to the characteristic flavors of black pepper. Mediates the conversion of (2E,6E)-farnesyl diphosphate (FPP) into beta-caryophyllene and, as a minor compound, into alpha-humulene. The sequence is that of Terpene synthase 1 from Piper nigrum (Black pepper).